The following is a 78-amino-acid chain: Beta-defensin 12 (78 aa).

Positions 1-27 (MALSREVFYFGFALFFIVVELPSGSWA) are cleaved as a signal peptide. 3 cysteine pairs are disulfide-bonded: cysteine 46–cysteine 73, cysteine 53–cysteine 67, and cysteine 57–cysteine 74.

It belongs to the beta-defensin family. As to expression, only expressed in epididymis (caput, corpus and cauda).

It localises to the secreted. Functionally, has antibacterial activity. The chain is Beta-defensin 12 (Defb12) from Mus musculus (Mouse).